Consider the following 301-residue polypeptide: Probable serine acetyltransferase 3 (301 aa).

Residues 280-301 are disordered; the sequence is IGKKAEPQRELPGVTMEQRWSD.

The protein belongs to the transferase hexapeptide repeat family. Homomultimer.

It carries out the reaction L-serine + acetyl-CoA = O-acetyl-L-serine + CoA. The protein operates within amino-acid biosynthesis; L-cysteine biosynthesis; L-cysteine from L-serine: step 1/2. This is Probable serine acetyltransferase 3 (SAT3) from Oryza sativa subsp. japonica (Rice).